We begin with the raw amino-acid sequence, 374 residues long: N-acetyldiaminopimelate deacetylase (374 aa).

Asp-69 is an active-site residue. Glu-128 (proton acceptor) is an active-site residue.

It belongs to the peptidase M20A family. N-acetyldiaminopimelate deacetylase subfamily.

It carries out the reaction N-acetyl-(2S,6S)-2,6-diaminopimelate + H2O = (2S,6S)-2,6-diaminopimelate + acetate. It functions in the pathway amino-acid biosynthesis; L-lysine biosynthesis via DAP pathway; LL-2,6-diaminopimelate from (S)-tetrahydrodipicolinate (acetylase route): step 3/3. Functionally, catalyzes the conversion of N-acetyl-diaminopimelate to diaminopimelate and acetate. The protein is N-acetyldiaminopimelate deacetylase of Bacillus velezensis (strain DSM 23117 / BGSC 10A6 / LMG 26770 / FZB42) (Bacillus amyloliquefaciens subsp. plantarum).